The primary structure comprises 507 residues: Maturase K (507 aa).

The protein belongs to the intron maturase 2 family. MatK subfamily.

It localises to the plastid. It is found in the chloroplast. Functionally, usually encoded in the trnK tRNA gene intron. Probably assists in splicing its own and other chloroplast group II introns. This is Maturase K from Ranunculus macranthus (Large buttercup).